The chain runs to 477 residues: HPREQVQLLAKKQVLQEALQALQVALCSQAKLQAQRELLQAKLEQLGPGEPPPVLLLQDDRHSTSSSEQEREGGRTPTLEILKSHISGIFRPKFSLPPPLQLVPEVQKPLHEQLWYHGALPRAEVAELLTHSGDFLVRESQGKQEYVLSVLWDGQPRHFIIQSADNLYRPEGDGFASIPLLVDHLLRSQQPLTKKSGIVLNRAVPKDKWVLNHEDLVLGEQIGRGNFGEVFSGRLRADNTLVAVKSCRETLPPDIKAKFLQEAKILKQYSHPNIVRLIGVCTQKQPIYIVMELVQGGDFLTFLRTEGARLRMKTLLQMVGDAAAGMEYLESKCCIHRDLAARNCLVTEKNVLKISDFGMSREEADGVYAASGGLRLVPVKWTAPEALNYGRYSSESDVWSFGILLWETFSLGASPYPNLSNQQTREFVEKGGRLPCPELCPDAVFRLMEQCWAYEPGQRPSFSAFYQELQSIRKRHR.

The tract at residues 49 to 76 is disordered; sequence GEPPPVLLLQDDRHSTSSSEQEREGGRT. A compositionally biased stretch (basic and acidic residues) spans 58–74; it reads QDDRHSTSSSEQEREGG. Residues 115–204 enclose the SH2 domain; sequence WYHGALPRAE…KSGIVLNRAV (90 aa). The 262-residue stretch at 216-477 folds into the Protein kinase domain; the sequence is LVLGEQIGRG…ELQSIRKRHR (262 aa). ATP contacts are provided by residues 222–230 and K245; that span reads IGRGNFGEV. The Proton acceptor role is filled by D338. Y368 bears the Phosphotyrosine; by autocatalysis mark.

Belongs to the protein kinase superfamily. Tyr protein kinase family. Fes/fps subfamily.

The catalysed reaction is L-tyrosyl-[protein] + ATP = O-phospho-L-tyrosyl-[protein] + ADP + H(+). This is Tyrosine-protein kinase transforming protein Fes (V-FES) from Feline sarcoma virus (strain Snyder-Theilen).